We begin with the raw amino-acid sequence, 158 residues long: Regulator of sigma D (158 aa).

This sequence belongs to the Rsd/AlgQ family. In terms of assembly, interacts with RpoD.

Its subcellular location is the cytoplasm. Functionally, binds RpoD and negatively regulates RpoD-mediated transcription activation by preventing the interaction between the primary sigma factor RpoD with the catalytic core of the RNA polymerase and with promoter DNA. May be involved in replacement of the RNA polymerase sigma subunit from RpoD to RpoS during the transition from exponential growth to the stationary phase. The polypeptide is Regulator of sigma D (Escherichia coli O6:H1 (strain CFT073 / ATCC 700928 / UPEC)).